The following is an 81-amino-acid chain: Photosystem I iron-sulfur center (81 aa).

4Fe-4S ferredoxin-type domains are found at residues S2–W31 and G37–Y68. The [4Fe-4S] cluster site is built by C11, C14, C17, C21, C48, C51, C54, and C58.

In terms of assembly, the eukaryotic PSI reaction center is composed of at least 11 subunits. The cofactor is [4Fe-4S] cluster.

The protein resides in the plastid. It is found in the chloroplast thylakoid membrane. It carries out the reaction reduced [plastocyanin] + hnu + oxidized [2Fe-2S]-[ferredoxin] = oxidized [plastocyanin] + reduced [2Fe-2S]-[ferredoxin]. Apoprotein for the two 4Fe-4S centers FA and FB of photosystem I (PSI); essential for photochemical activity. FB is the terminal electron acceptor of PSI, donating electrons to ferredoxin. The C-terminus interacts with PsaA/B/D and helps assemble the protein into the PSI complex. Required for binding of PsaD and PsaE to PSI. PSI is a plastocyanin/cytochrome c6-ferredoxin oxidoreductase, converting photonic excitation into a charge separation, which transfers an electron from the donor P700 chlorophyll pair to the spectroscopically characterized acceptors A0, A1, FX, FA and FB in turn. This chain is Photosystem I iron-sulfur center, found in Phaeodactylum tricornutum (strain CCAP 1055/1).